The sequence spans 334 residues: Malate dehydrogenase, cytoplasmic (334 aa).

S2 carries the N-acetylserine modification. NAD(+)-binding positions include 11 to 17 (GAAGQIA) and D42. Substrate contacts are provided by R92 and R98. N105 is a binding site for NAD(+). At K110 the chain carries N6-succinyllysine. Q112 lines the NAD(+) pocket. N6-acetyllysine occurs at positions 118 and 121. Residue 129–131 (VGN) coordinates NAD(+). 2 residues coordinate substrate: N131 and R162. Catalysis depends on H187, which acts as the Proton acceptor. K214 is subject to N6-succinyllysine. Residue S217 is modified to Phosphoserine. The residue at position 230 (R230) is an Omega-N-methylarginine. S241 is modified (phosphoserine). K298 carries the post-translational modification N6-acetyllysine; alternate. K298 carries the N6-succinyllysine; alternate modification. S309 carries the phosphoserine modification. N6-succinyllysine is present on K318. S333 is modified (phosphoserine).

Belongs to the LDH/MDH superfamily. MDH type 2 family. In terms of assembly, homodimer. In terms of processing, ISGylated. Acetylation at Lys-118 dramatically enhances enzymatic activity and promotes adipogenic differentiation.

The protein resides in the cytoplasm. The protein localises to the cytosol. The catalysed reaction is (S)-malate + NAD(+) = oxaloacetate + NADH + H(+). It carries out the reaction (2R)-2-hydroxy-3-(4-hydroxyphenyl)propanoate + NAD(+) = 3-(4-hydroxyphenyl)pyruvate + NADH + H(+). It catalyses the reaction (S)-2-hydroxyglutarate + NAD(+) = 2-oxoglutarate + NADH + H(+). Catalyzes the reduction of aromatic alpha-keto acids in the presence of NADH. Plays essential roles in the malate-aspartate shuttle and the tricarboxylic acid cycle, important in mitochondrial NADH supply for oxidative phosphorylation. Catalyzes the reduction of 2-oxoglutarate to 2-hydroxyglutarate, leading to elevated reactive oxygen species (ROS). In Bos taurus (Bovine), this protein is Malate dehydrogenase, cytoplasmic (MDH1).